The sequence spans 352 residues: Peptide chain release factor 1 (352 aa).

Gln233 carries the post-translational modification N5-methylglutamine. The interval 288–309 is disordered; sequence NAKDRKEQVGSGDRSERIRTYN. The span at 289–306 shows a compositional bias: basic and acidic residues; that stretch reads AKDRKEQVGSGDRSERIR.

This sequence belongs to the prokaryotic/mitochondrial release factor family. Post-translationally, methylated by PrmC. Methylation increases the termination efficiency of RF1.

The protein localises to the cytoplasm. In terms of biological role, peptide chain release factor 1 directs the termination of translation in response to the peptide chain termination codons UAG and UAA. The chain is Peptide chain release factor 1 (prfA) from Helicobacter pylori (strain ATCC 700392 / 26695) (Campylobacter pylori).